The primary structure comprises 518 residues: Bifunctional purine biosynthesis protein PurH (518 aa).

An MGS-like domain is found at 1-144 (MNRRAVLSVS…KNQERVSIVV (144 aa)).

Belongs to the PurH family.

The catalysed reaction is (6R)-10-formyltetrahydrofolate + 5-amino-1-(5-phospho-beta-D-ribosyl)imidazole-4-carboxamide = 5-formamido-1-(5-phospho-D-ribosyl)imidazole-4-carboxamide + (6S)-5,6,7,8-tetrahydrofolate. The enzyme catalyses IMP + H2O = 5-formamido-1-(5-phospho-D-ribosyl)imidazole-4-carboxamide. The protein operates within purine metabolism; IMP biosynthesis via de novo pathway; 5-formamido-1-(5-phospho-D-ribosyl)imidazole-4-carboxamide from 5-amino-1-(5-phospho-D-ribosyl)imidazole-4-carboxamide (10-formyl THF route): step 1/1. It functions in the pathway purine metabolism; IMP biosynthesis via de novo pathway; IMP from 5-formamido-1-(5-phospho-D-ribosyl)imidazole-4-carboxamide: step 1/1. The protein is Bifunctional purine biosynthesis protein PurH of Desulfitobacterium hafniense (strain DSM 10664 / DCB-2).